The primary structure comprises 349 residues: Phenylalanine--tRNA ligase alpha subunit (349 aa).

E258 is a binding site for Mg(2+).

The protein belongs to the class-II aminoacyl-tRNA synthetase family. Phe-tRNA synthetase alpha subunit type 1 subfamily. Tetramer of two alpha and two beta subunits. Requires Mg(2+) as cofactor.

It localises to the cytoplasm. The catalysed reaction is tRNA(Phe) + L-phenylalanine + ATP = L-phenylalanyl-tRNA(Phe) + AMP + diphosphate + H(+). The chain is Phenylalanine--tRNA ligase alpha subunit from Rickettsia conorii (strain ATCC VR-613 / Malish 7).